Reading from the N-terminus, the 195-residue chain is MRTAEITRNTNETRIRVAVNLDGTGKQTLDTGVPFLDHMLDQIARHGLIDLDIKAEGDLHIDAHHTVEDVGITLGMAIAKAVGDKAGLRRYGHAYVPLDEALSRVVIDFSGRPGLEYHIPFTRARIGDFDVDLTREFFQGLVNHALVTLHIDNLRGVNAHHQCETVFKAFGRALRMALELDPRMGGAVPSTKGVL.

This sequence belongs to the imidazoleglycerol-phosphate dehydratase family.

Its subcellular location is the cytoplasm. The catalysed reaction is D-erythro-1-(imidazol-4-yl)glycerol 3-phosphate = 3-(imidazol-4-yl)-2-oxopropyl phosphate + H2O. It participates in amino-acid biosynthesis; L-histidine biosynthesis; L-histidine from 5-phospho-alpha-D-ribose 1-diphosphate: step 6/9. This is Imidazoleglycerol-phosphate dehydratase from Bordetella petrii (strain ATCC BAA-461 / DSM 12804 / CCUG 43448).